The primary structure comprises 1371 residues: DNA-directed RNA polymerase subunit beta'' (1371 aa).

Residues Cys220, Cys293, Cys300, and Cys303 each coordinate Zn(2+).

This sequence belongs to the RNA polymerase beta' chain family. RpoC2 subfamily. As to quaternary structure, in plastids the minimal PEP RNA polymerase catalytic core is composed of four subunits: alpha, beta, beta', and beta''. When a (nuclear-encoded) sigma factor is associated with the core the holoenzyme is formed, which can initiate transcription. Zn(2+) serves as cofactor.

The protein resides in the plastid. It is found in the chloroplast. The enzyme catalyses RNA(n) + a ribonucleoside 5'-triphosphate = RNA(n+1) + diphosphate. Its function is as follows. DNA-dependent RNA polymerase catalyzes the transcription of DNA into RNA using the four ribonucleoside triphosphates as substrates. In Lobularia maritima (Sweet alyssum), this protein is DNA-directed RNA polymerase subunit beta''.